Consider the following 166-residue polypeptide: Small ribosomal subunit protein uS5 (166 aa).

The S5 DRBM domain maps to 11-74 (LQEKLIAVNR…EKARRNMINV (64 aa)).

This sequence belongs to the universal ribosomal protein uS5 family. In terms of assembly, part of the 30S ribosomal subunit. Contacts proteins S4 and S8.

With S4 and S12 plays an important role in translational accuracy. Its function is as follows. Located at the back of the 30S subunit body where it stabilizes the conformation of the head with respect to the body. This is Small ribosomal subunit protein uS5 from Pasteurella multocida (strain Pm70).